The sequence spans 61 residues: Lens epithelial cell protein LEP503 (61 aa).

The protein is Lens epithelial cell protein LEP503 (Lenep) of Mus musculus (Mouse).